Reading from the N-terminus, the 40-residue chain is Photosystem II reaction center protein J (40 aa).

A helical transmembrane segment spans residues 8–28; it reads IPLWIIGTGAGILVIGLIGIF.

This sequence belongs to the PsbJ family. As to quaternary structure, PSII is composed of 1 copy each of membrane proteins PsbA, PsbB, PsbC, PsbD, PsbE, PsbF, PsbH, PsbI, PsbJ, PsbK, PsbL, PsbM, PsbT, PsbX, PsbY, PsbZ, Psb30/Ycf12, at least 3 peripheral proteins of the oxygen-evolving complex and a large number of cofactors. It forms dimeric complexes.

Its subcellular location is the plastid. It localises to the chloroplast thylakoid membrane. In terms of biological role, one of the components of the core complex of photosystem II (PSII). PSII is a light-driven water:plastoquinone oxidoreductase that uses light energy to abstract electrons from H(2)O, generating O(2) and a proton gradient subsequently used for ATP formation. It consists of a core antenna complex that captures photons, and an electron transfer chain that converts photonic excitation into a charge separation. The chain is Photosystem II reaction center protein J from Aethionema grandiflorum (Persian stone-cress).